A 231-amino-acid chain; its full sequence is Ion-translocating oxidoreductase complex subunit E (231 aa).

A run of 6 helical transmembrane segments spans residues Ala18 to Ala38, Leu39 to Leu59, Thr63 to Val83, Leu86 to Val106, Ala125 to Leu145, and Pro182 to Gly202.

It belongs to the NqrDE/RnfAE family. As to quaternary structure, the complex is composed of six subunits: RsxA, RsxB, RsxC, RsxD, RsxE and RsxG.

The protein resides in the cell inner membrane. Its function is as follows. Part of a membrane-bound complex that couples electron transfer with translocation of ions across the membrane. Required to maintain the reduced state of SoxR. This Escherichia coli O127:H6 (strain E2348/69 / EPEC) protein is Ion-translocating oxidoreductase complex subunit E.